The following is a 389-amino-acid chain: Phosphoglycerate kinase (389 aa).

Substrate contacts are provided by residues 21–23 (DLN), Arg36, 59–62 (HLGR), Arg112, and Arg145. Residues Lys196, Glu318, and 344–347 (GGDS) contribute to the ATP site.

This sequence belongs to the phosphoglycerate kinase family. As to quaternary structure, monomer.

The protein localises to the cytoplasm. The catalysed reaction is (2R)-3-phosphoglycerate + ATP = (2R)-3-phospho-glyceroyl phosphate + ADP. It participates in carbohydrate degradation; glycolysis; pyruvate from D-glyceraldehyde 3-phosphate: step 2/5. This Desulfovibrio desulfuricans (strain ATCC 27774 / DSM 6949 / MB) protein is Phosphoglycerate kinase.